A 99-amino-acid polypeptide reads, in one-letter code: Putative membrane protein insertion efficiency factor (99 aa).

The protein belongs to the UPF0161 family.

The protein localises to the cell membrane. Functionally, could be involved in insertion of integral membrane proteins into the membrane. The sequence is that of Putative membrane protein insertion efficiency factor from Corynebacterium glutamicum (strain ATCC 13032 / DSM 20300 / JCM 1318 / BCRC 11384 / CCUG 27702 / LMG 3730 / NBRC 12168 / NCIMB 10025 / NRRL B-2784 / 534).